Here is an 804-residue protein sequence, read N- to C-terminus: Lon protease (804 aa).

The tract at residues 1-23 (MSADSENETSESSPAGEATASTS) is disordered. One can recognise a Lon N-terminal domain in the interval 30–224 (LILLPVRNAV…KVLDAVAGRI (195 aa)). 376–383 (GPPGVGKT) serves as a coordination point for ATP. The Lon proteolytic domain maps to 612–793 (TSLPGVVTGL…DDAVREIIED (182 aa)). Catalysis depends on residues Ser-699 and Lys-742.

It belongs to the peptidase S16 family. Homohexamer. Organized in a ring with a central cavity.

Its subcellular location is the cytoplasm. It catalyses the reaction Hydrolysis of proteins in presence of ATP.. In terms of biological role, ATP-dependent serine protease that mediates the selective degradation of mutant and abnormal proteins as well as certain short-lived regulatory proteins. Required for cellular homeostasis and for survival from DNA damage and developmental changes induced by stress. Degrades polypeptides processively to yield small peptide fragments that are 5 to 10 amino acids long. Binds to DNA in a double-stranded, site-specific manner. The polypeptide is Lon protease (Paraburkholderia phytofirmans (strain DSM 17436 / LMG 22146 / PsJN) (Burkholderia phytofirmans)).